Here is a 329-residue protein sequence, read N- to C-terminus: GTP 3',8-cyclase (329 aa).

The region spanning 8–234 (AFARKFYYLR…QLRQRSDGPA (227 aa)) is the Radical SAM core domain. Arg-17 is a binding site for GTP. Residues Cys-24 and Cys-28 each contribute to the [4Fe-4S] cluster site. Tyr-30 provides a ligand contact to S-adenosyl-L-methionine. Cys-31 contributes to the [4Fe-4S] cluster binding site. Residue Arg-68 participates in GTP binding. Gly-72 contacts S-adenosyl-L-methionine. Residue Thr-99 coordinates GTP. S-adenosyl-L-methionine is bound at residue Ser-123. Residue Lys-160 coordinates GTP. Residue Met-194 coordinates S-adenosyl-L-methionine. Residues Cys-257 and Cys-260 each coordinate [4Fe-4S] cluster. Position 262–264 (262–264 (RLR)) interacts with GTP. Position 274 (Cys-274) interacts with [4Fe-4S] cluster.

This sequence belongs to the radical SAM superfamily. MoaA family. Monomer and homodimer. [4Fe-4S] cluster serves as cofactor.

It catalyses the reaction GTP + AH2 + S-adenosyl-L-methionine = (8S)-3',8-cyclo-7,8-dihydroguanosine 5'-triphosphate + 5'-deoxyadenosine + L-methionine + A + H(+). The protein operates within cofactor biosynthesis; molybdopterin biosynthesis. Its function is as follows. Catalyzes the cyclization of GTP to (8S)-3',8-cyclo-7,8-dihydroguanosine 5'-triphosphate. This Salmonella newport (strain SL254) protein is GTP 3',8-cyclase.